Here is a 148-residue protein sequence, read N- to C-terminus: Small ribosomal subunit protein bS6 (148 aa).

Residues 96 to 148 (HEEGQSAMLTRRDDRRERDGDDRPRRREGGFDRGDRGDRGPRRPRDNEAGEGA) are disordered.

It belongs to the bacterial ribosomal protein bS6 family.

In terms of biological role, binds together with bS18 to 16S ribosomal RNA. The sequence is that of Small ribosomal subunit protein bS6 from Brucella melitensis biotype 1 (strain ATCC 23456 / CCUG 17765 / NCTC 10094 / 16M).